Here is a 366-residue protein sequence, read N- to C-terminus: tRNA 2-selenouridine synthase (366 aa).

The region spanning 12-135 is the Rhodanese domain; that stretch reads FLNDVPMMDA…MRTFLLDTLH (124 aa). Residue Cys-95 is the S-selanylcysteine intermediate of the active site.

Belongs to the SelU family. As to quaternary structure, monomer.

It catalyses the reaction 5-methylaminomethyl-2-thiouridine(34) in tRNA + selenophosphate + (2E)-geranyl diphosphate + H2O + H(+) = 5-methylaminomethyl-2-selenouridine(34) in tRNA + (2E)-thiogeraniol + phosphate + diphosphate. The catalysed reaction is 5-methylaminomethyl-2-thiouridine(34) in tRNA + (2E)-geranyl diphosphate = 5-methylaminomethyl-S-(2E)-geranyl-thiouridine(34) in tRNA + diphosphate. It carries out the reaction 5-methylaminomethyl-S-(2E)-geranyl-thiouridine(34) in tRNA + selenophosphate + H(+) = 5-methylaminomethyl-2-(Se-phospho)selenouridine(34) in tRNA + (2E)-thiogeraniol. The enzyme catalyses 5-methylaminomethyl-2-(Se-phospho)selenouridine(34) in tRNA + H2O = 5-methylaminomethyl-2-selenouridine(34) in tRNA + phosphate. Its function is as follows. Involved in the post-transcriptional modification of the uridine at the wobble position (U34) of tRNA(Lys), tRNA(Glu) and tRNA(Gln). Catalyzes the conversion of 2-thiouridine (S2U-RNA) to 2-selenouridine (Se2U-RNA). Acts in a two-step process involving geranylation of 2-thiouridine (S2U) to S-geranyl-2-thiouridine (geS2U) and subsequent selenation of the latter derivative to 2-selenouridine (Se2U) in the tRNA chain. The protein is tRNA 2-selenouridine synthase of Pseudomonas syringae pv. syringae (strain B728a).